The sequence spans 227 residues: ATP-dependent Clp protease proteolytic subunit (227 aa).

Serine 120 (nucleophile) is an active-site residue. Histidine 145 is a catalytic residue.

Belongs to the peptidase S14 family. As to quaternary structure, fourteen ClpP subunits assemble into 2 heptameric rings which stack back to back to give a disk-like structure with a central cavity, resembling the structure of eukaryotic proteasomes.

It is found in the cytoplasm. It carries out the reaction Hydrolysis of proteins to small peptides in the presence of ATP and magnesium. alpha-casein is the usual test substrate. In the absence of ATP, only oligopeptides shorter than five residues are hydrolyzed (such as succinyl-Leu-Tyr-|-NHMec, and Leu-Tyr-Leu-|-Tyr-Trp, in which cleavage of the -Tyr-|-Leu- and -Tyr-|-Trp bonds also occurs).. Functionally, cleaves peptides in various proteins in a process that requires ATP hydrolysis. Has a chymotrypsin-like activity. Plays a major role in the degradation of misfolded proteins. This is ATP-dependent Clp protease proteolytic subunit from Rickettsia bellii (strain RML369-C).